The primary structure comprises 437 residues: Aspartate aminotransferase, mitochondrial (437 aa).

L-aspartate-binding residues include Gly-72, Trp-167, and Asn-220. N6-(pyridoxal phosphate)lysine is present on Lys-284. An L-aspartate-binding site is contributed by Arg-413.

This sequence belongs to the class-I pyridoxal-phosphate-dependent aminotransferase family. In terms of assembly, homodimer. It depends on pyridoxal 5'-phosphate as a cofactor.

It localises to the mitochondrion matrix. The catalysed reaction is L-aspartate + 2-oxoglutarate = oxaloacetate + L-glutamate. Functionally, plays a key role in amino acid metabolism. Important for metabolite exchange between mitochondria and cytosol. In Schizosaccharomyces pombe (strain 972 / ATCC 24843) (Fission yeast), this protein is Aspartate aminotransferase, mitochondrial.